Here is a 160-residue protein sequence, read N- to C-terminus: MAPK regulated corepressor interacting protein 2 (160 aa).

N-acetylmethionine is present on Met1. Positions 1 to 22 (MYTITKGPSKLVAQRRTGPTQQ) are disordered. Arg35 is subject to Omega-N-methylarginine. Positions 43–64 (LPAHLQPSAQTQGPWPLASSGP) are disordered. Position 61 is a phosphoserine (Ser61). Arg65 carries the omega-N-methylarginine modification. Residue Ser82 is modified to Phosphoserine.

The protein belongs to the MCRIP family. In terms of assembly, interacts with DDX6. Interacts with MCRIP1.

It is found in the cytoplasm. Its subcellular location is the stress granule. The protein resides in the nucleus. This is MAPK regulated corepressor interacting protein 2 (Mcrip2) from Mus musculus (Mouse).